Here is a 60-residue protein sequence, read N- to C-terminus: Large ribosomal subunit protein bL33 (60 aa).

It belongs to the bacterial ribosomal protein bL33 family.

The chain is Large ribosomal subunit protein bL33 from Chlorobium phaeovibrioides (strain DSM 265 / 1930) (Prosthecochloris vibrioformis (strain DSM 265)).